The chain runs to 117 residues: Large ribosomal subunit protein bL19 (117 aa).

The protein belongs to the bacterial ribosomal protein bL19 family.

This protein is located at the 30S-50S ribosomal subunit interface and may play a role in the structure and function of the aminoacyl-tRNA binding site. This is Large ribosomal subunit protein bL19 from Exiguobacterium sibiricum (strain DSM 17290 / CCUG 55495 / CIP 109462 / JCM 13490 / 255-15).